We begin with the raw amino-acid sequence, 358 residues long: Peptide chain release factor 1 (358 aa).

Gln233 bears the N5-methylglutamine mark. The disordered stretch occupies residues 286 to 309 (AELASARKSQVGTGDRSERIRTYN).

This sequence belongs to the prokaryotic/mitochondrial release factor family. Post-translationally, methylated by PrmC. Methylation increases the termination efficiency of RF1.

The protein resides in the cytoplasm. Its function is as follows. Peptide chain release factor 1 directs the termination of translation in response to the peptide chain termination codons UAG and UAA. The protein is Peptide chain release factor 1 of Carboxydothermus hydrogenoformans (strain ATCC BAA-161 / DSM 6008 / Z-2901).